Consider the following 249-residue polypeptide: MYKVVLIRHGESVWNKENKFTGWSDVDLSEKGNEEALKAGKQLKKDGFTFDLAYTSVLKRAIKTLWNVLNTMDLLWTPVVKDWRLNERHYGALQGLNKAETAAKYGEEQVKIWRRSYDIAPMALDENDERYPGKEARYSGLLKGEIPLAECLKDTVARVVPYWGKEVVPQIKAGKKIIIAAHGNSLRALVKYLDNISDSNIVNLNIPTAMPLVYELDENLKAVKNYYLGDPEAVKKAMETVASQGKVKK.

Residues 8 to 15, 21 to 22, Arg-60, 87 to 90, Lys-98, 114 to 115, and 183 to 184 each bind substrate; these read RHGESVWN, TG, ERHY, RR, and GN. The active-site Tele-phosphohistidine intermediate is the His-9. The active-site Proton donor/acceptor is the Glu-87.

This sequence belongs to the phosphoglycerate mutase family. BPG-dependent PGAM subfamily.

The catalysed reaction is (2R)-2-phosphoglycerate = (2R)-3-phosphoglycerate. It functions in the pathway carbohydrate degradation; glycolysis; pyruvate from D-glyceraldehyde 3-phosphate: step 3/5. Catalyzes the interconversion of 2-phosphoglycerate and 3-phosphoglycerate. This chain is 2,3-bisphosphoglycerate-dependent phosphoglycerate mutase, found in Endomicrobium trichonymphae.